We begin with the raw amino-acid sequence, 164 residues long: Lipoprotein signal peptidase (164 aa).

A run of 3 helical transmembrane segments spans residues 12-32 (WLWL…LILQ), 70-90 (WFFA…MYRS), and 102-122 (ALII…GFVV). Catalysis depends on residues D123 and D141. Residues 137-157 (FNLADTAICVGAALIVLEGFL) traverse the membrane as a helical segment.

This sequence belongs to the peptidase A8 family.

The protein localises to the cell inner membrane. The enzyme catalyses Release of signal peptides from bacterial membrane prolipoproteins. Hydrolyzes -Xaa-Yaa-Zaa-|-(S,diacylglyceryl)Cys-, in which Xaa is hydrophobic (preferably Leu), and Yaa (Ala or Ser) and Zaa (Gly or Ala) have small, neutral side chains.. The protein operates within protein modification; lipoprotein biosynthesis (signal peptide cleavage). Functionally, this protein specifically catalyzes the removal of signal peptides from prolipoproteins. This is Lipoprotein signal peptidase from Escherichia coli O6:K15:H31 (strain 536 / UPEC).